We begin with the raw amino-acid sequence, 1027 residues long: Scavenger receptor cysteine-rich domain-containing protein SCART1 (1027 aa).

A signal peptide spans 1–19 (MRAALWTLGLGPLLLNLWA). Over 20–906 (VPIGGPGALR…APFRTFWVVS (887 aa)) the chain is Extracellular. The SRCR 1 domain occupies 28–128 (LRLAYRHSTC…HAWVVVALCS (101 aa)). Disulfide bonds link Cys-53-Cys-117, Cys-66-Cys-127, and Cys-97-Cys-107. N-linked (GlcNAc...) asparagine glycosylation is present at Asn-94. An N-linked (GlcNAc...) asparagine glycan is attached at Asn-129. SRCR domains are found at residues 135–227 (LRLV…VVCS), 232–326 (ARLV…LRCS), 328–428 (FRMV…AVCS), 434–534 (LRLR…VVCS), 555–656 (LSLH…VFCS), 661–761 (LRLR…AGLS), and 786–886 (LRVR…VRCW). Cystine bridges form between Cys-160/Cys-216, Cys-171/Cys-226, Cys-196/Cys-206, Cys-253/Cys-315, Cys-266/Cys-325, and Cys-297/Cys-307. Residue Asn-332 is glycosylated (N-linked (GlcNAc...) asparagine). Cystine bridges form between Cys-353–Cys-417, Cys-366–Cys-427, Cys-397–Cys-407, Cys-472–Cys-533, Cys-503–Cys-513, Cys-594–Cys-655, and Cys-625–Cys-635. Cystine bridges form between Cys-824/Cys-885 and Cys-855/Cys-865. The helical transmembrane segment at 907 to 927 (VVLGSLLGLLLLGLMAFLILP) threads the bilayer. Residues 928-1027 (RVTQAMQRGL…AAFPLEEMTL (100 aa)) are Cytoplasmic-facing.

Mainly expressed by CD4(+) and CD8(+) T lymphocytes. Also highly expressed in small intestine and colon. Expressed (at protein level) in small intestine, stomach, gall bladder, and placental villi.

The protein localises to the membrane. May play a role in the immune system, perhaps as a co-receptor on alphabeta and gammadelta T-cells. The chain is Scavenger receptor cysteine-rich domain-containing protein SCART1 from Homo sapiens (Human).